The primary structure comprises 149 residues: Succinate dehydrogenase assembly factor 2, mitochondrial (149 aa).

This sequence belongs to the SDHAF2 family. Interacts with the flavoprotein subunit within the SDH catalytic dimer.

The protein localises to the mitochondrion matrix. Functionally, plays an essential role in the assembly of succinate dehydrogenase (SDH), an enzyme complex (also referred to as respiratory complex II) that is a component of both the tricarboxylic acid (TCA) cycle and the mitochondrial electron transport chain, and which couples the oxidation of succinate to fumarate with the reduction of ubiquinone (coenzyme Q) to ubiquinol. Required for flavinylation (covalent attachment of FAD) of the flavoprotein subunit of the SDH catalytic dimer. The sequence is that of Succinate dehydrogenase assembly factor 2, mitochondrial from Scheffersomyces stipitis (strain ATCC 58785 / CBS 6054 / NBRC 10063 / NRRL Y-11545) (Yeast).